We begin with the raw amino-acid sequence, 218 residues long: Pyridoxine/pyridoxamine 5'-phosphate oxidase (218 aa).

Substrate is bound by residues 14–17 (RREY) and K72. Residues 67–72 (RIVLLK), 82–83 (YT), R88, K89, and Q111 each bind FMN. The substrate site is built by Y129, R133, and S137. Residues 146–147 (QS) and W191 contribute to the FMN site. 197–199 (RLH) lines the substrate pocket. R201 serves as a coordination point for FMN.

Belongs to the pyridoxamine 5'-phosphate oxidase family. Homodimer. The cofactor is FMN.

The enzyme catalyses pyridoxamine 5'-phosphate + O2 + H2O = pyridoxal 5'-phosphate + H2O2 + NH4(+). It carries out the reaction pyridoxine 5'-phosphate + O2 = pyridoxal 5'-phosphate + H2O2. It functions in the pathway cofactor metabolism; pyridoxal 5'-phosphate salvage; pyridoxal 5'-phosphate from pyridoxamine 5'-phosphate: step 1/1. The protein operates within cofactor metabolism; pyridoxal 5'-phosphate salvage; pyridoxal 5'-phosphate from pyridoxine 5'-phosphate: step 1/1. Catalyzes the oxidation of either pyridoxine 5'-phosphate (PNP) or pyridoxamine 5'-phosphate (PMP) into pyridoxal 5'-phosphate (PLP). The chain is Pyridoxine/pyridoxamine 5'-phosphate oxidase from Salmonella paratyphi B (strain ATCC BAA-1250 / SPB7).